A 335-amino-acid chain; its full sequence is MREPAFWHRPPSWQSHLLSPLSMLYGAVAARRMAQPGIKAGVPVICVGNYHVGGAGKTPTVLALTALLRGQGEQPVVLSRGYGGRLPGPVLVDPAAHGAADVGDEPLMMAAHVPVVVSRARADGVGLAKAHRASVILMDDGFQNPSITKDLALIVVDGGRGLGNARVFPAGPLRTPLPPQLARTDALMIIGRGEAGEAVASRVAAAGKPVFRAQLQPDAGVVASLAGRPLLAFAGIGDPQRFFRSLRASGLEIRAERPFPDHHPFTDGDIKALVDQATREQLALVTTEKDLVRLRGRGWDHPELAPMAFPVTLQFDDETAVRSLVARRLSAARAS.

51–58 (HVGGAGKT) serves as a coordination point for ATP.

The protein belongs to the LpxK family.

It carries out the reaction a lipid A disaccharide + ATP = a lipid IVA + ADP + H(+). It functions in the pathway glycolipid biosynthesis; lipid IV(A) biosynthesis; lipid IV(A) from (3R)-3-hydroxytetradecanoyl-[acyl-carrier-protein] and UDP-N-acetyl-alpha-D-glucosamine: step 6/6. Its function is as follows. Transfers the gamma-phosphate of ATP to the 4'-position of a tetraacyldisaccharide 1-phosphate intermediate (termed DS-1-P) to form tetraacyldisaccharide 1,4'-bis-phosphate (lipid IVA). This chain is Tetraacyldisaccharide 4'-kinase, found in Bradyrhizobium sp. (strain ORS 278).